Consider the following 615-residue polypeptide: TORTIFOLIA1-like protein 3 (615 aa).

HEAT repeat units follow at residues 44–81 (GNLQSFISVILSVDTGDKPAVRKHCIHLLAVLSVSLPL), 86–123 (PFLSKILTRITRRLRDPDSSIRSTCVAAVSAISSRTTK), 125–163 (PFYSAFMKPLADTLFTEQEVNAQIGAALCLAAAIDSASD), 168–205 (RLGQTLLPRLEKLVKCNAFKAKSAGVVVIGSVIGAGGL), and 213–250 (GGLKGLVDCLLSFLVSEDWAARKAAAEALGRLATMERN). The segment at 288 to 446 (VPDLSEEVSP…HHVLSENPNS (159 aa)) is disordered. A compositionally biased stretch (polar residues) spans 318 to 347 (RVGSTPAKSRTHLVNRSTPPGSSLATTARK). The span at 391–406 (DEQHCDHDENAKETSH) shows a compositional bias: basic and acidic residues. The span at 407–426 (SSHNTVQKLGGVSSSLNGNI) shows a compositional bias: polar residues. Serine 456 carries the post-translational modification Phosphoserine.

This is TORTIFOLIA1-like protein 3 from Arabidopsis thaliana (Mouse-ear cress).